Reading from the N-terminus, the 99-residue chain is Malonate decarboxylase acyl carrier protein (99 aa).

Residue S25 is modified to O-(phosphoribosyl dephospho-coenzyme A)serine.

The protein belongs to the MdcC family. Post-translationally, covalently binds the prosthetic group of malonate decarboxylase.

Its subcellular location is the cytoplasm. Functionally, subunit of malonate decarboxylase, it is an acyl carrier protein to which acetyl and malonyl thioester residues are bound via a 2'-(5''-phosphoribosyl)-3'-dephospho-CoA prosthetic group and turn over during the catalytic mechanism. The polypeptide is Malonate decarboxylase acyl carrier protein (Pseudomonas aeruginosa (strain UCBPP-PA14)).